A 591-amino-acid polypeptide reads, in one-letter code: MGKLLEVNGPLVRARLPQVPNGEQVRIGTLGLVGEVIGREGQEALIQVYEGTESVRPGEEVEALGHPLSVELGPGLLGQVFDGIQRPLGRLLEASGDRISRGIQIQGLEQARVWRFQPNPQLAAGMAVTGGVCLGAVPETPTIEHRILVPPGLSGELLELAPEGEYRLSDVIARLDMGDHRSQALTLSHRWPVRNPRPYQQREHGVSPLMTGQRILDTFFPLLKGGKAAVPGPFGAGKTMVQQQIARWSNADIVIYVGCGERGNELVEVLDSFPELTDPHTGRSLMERTLLVANTSNMPVVAREASLYVGVTLGEYYRDQGYDVVIVADSTSRWAEALREVAGRLGQMPVEEGYPAYLASRLAAFYERAGRVQTLGGSVGSVTLIGAVSPPGGDFSEPVTSHTKEIVRTFWALSKDLADARHYPAVSWRESFSDDIPVAARWWAEHIDKHWQAGRAEAMTLLTQAEELSRIVNLVGPEALSGTQRWILEGATLIKEGLLQQSALDPVDSFCAPEKQFVLLDLMLQIYHQGVELLEQGVPVQELLGLPVLARARRCKSDYKNTQVETLQDFTKEIKEAFGRLGREHAEAGKI.

232-239 (GPFGAGKT) provides a ligand contact to ATP.

This sequence belongs to the ATPase alpha/beta chains family.

The catalysed reaction is ATP + H2O + 4 H(+)(in) = ADP + phosphate + 5 H(+)(out). Produces ATP from ADP in the presence of a proton gradient across the membrane. The V-type alpha chain is a catalytic subunit. This chain is V-type ATP synthase alpha chain, found in Nitrosococcus oceani (strain ATCC 19707 / BCRC 17464 / JCM 30415 / NCIMB 11848 / C-107).